The primary structure comprises 504 residues: Paired zinc finger protein 1 (504 aa).

C2H2-type zinc fingers lie at residues 12–35 (LLCG…RQRH) and 39–62 (HMCL…KNKH). The segment at 68–91 (FICVCCNWSFGTEIYLKCHEECMK) adopts a C2H2-type 3; degenerate zinc-finger fold. Disordered regions lie at residues 115–136 (ALNT…SPVP) and 154–173 (IESA…LVSG). The span at 159–172 (RSSASTSTPRTLVS) shows a compositional bias: polar residues. C2H2-type zinc fingers lie at residues 179 to 202 (IPCG…RRFH) and 206 to 229 (HTCL…KSQH). Residues 235–258 (YNCLCCNWTFLNQVHLISHKTCLK) form a C2H2-type 6; degenerate zinc finger. Residues 309 to 332 (LSCKSCGKFFYSERSLSKHHRQIH) form a C2H2-type 7 zinc finger. Residues 365–389 (FNCRCCNWSFATRRCLMSHVECLKK) form a C2H2-type 8; degenerate zinc finger.

As to expression, expressed in proximal gonad.

Its function is as follows. Possible transcriptional regulator. Involved in promoting segregation of chromosomes during meiosis, perhaps acting downstream of the let-60 RAS / mpk-1 MAPK signaling pathway. In Caenorhabditis elegans, this protein is Paired zinc finger protein 1.